The chain runs to 142 residues: ETGRIHHGGNFQAMAVTNAMEKTRLALHHIGKIIFAQSTELINPATNRGLPPSLAASDPSLNYHVKGVDIATAAYAAELGYLASPVSTHIQSAEMHNQAVNSMALVSARATINSIDVLSMLVATYLYNLCQALDLRALQAEF.

3 residues coordinate (E)-cinnamate: Lys-66, Glu-94, and Asn-97.

This sequence belongs to the PAL/histidase family. Homotetramer. In terms of processing, contains an active site 4-methylidene-imidazol-5-one (MIO), which is formed autocatalytically by cyclization and dehydration of residues Ala-Ser-Gly.

Its subcellular location is the cytoplasm. The catalysed reaction is L-phenylalanine = (E)-cinnamate + NH4(+). It participates in phenylpropanoid metabolism; trans-cinnamate biosynthesis; trans-cinnamate from L-phenylalanine: step 1/1. In terms of biological role, catalyzes the non-oxidative deamination of L-phenylalanine to form trans-cinnamic acid and a free ammonium ion. Facilitates the commitment step in phenylpropanoid pathways that produce secondary metabolites such as lignins, coumarins and flavonoids. This Agaricus bisporus (White button mushroom) protein is Phenylalanine ammonia-lyase (palA).